A 325-amino-acid polypeptide reads, in one-letter code: Mitochondrial thiamine pyrophosphate carrier 1 (325 aa).

Solcar repeat units follow at residues 12–111 (GSRL…TTLL), 122–209 (PPSA…LRPH), and 216–312 (PFSS…ALKF). 6 helical membrane-spanning segments follow: residues 17–35 (VTAA…IAPL), 92–108 (LLYV…YRTT), 127–143 (SFVA…AATY), 184–200 (VWDR…SFFF), 223–239 (VART…TFPL), and 287–304 (GLTV…VTMW).

It belongs to the mitochondrial carrier (TC 2.A.29) family.

Its subcellular location is the mitochondrion inner membrane. In terms of biological role, mitochondrial transporter that mediates uptake of thiamine pyrophosphate (ThPP) into mitochondria. The polypeptide is Mitochondrial thiamine pyrophosphate carrier 1 (TPC1) (Chaetomium globosum (strain ATCC 6205 / CBS 148.51 / DSM 1962 / NBRC 6347 / NRRL 1970) (Soil fungus)).